The primary structure comprises 439 residues: F-box/FBD/LRR-repeat protein At5g56570 (439 aa).

Residues 35–81 (PTELSDMPDDLIFKIFSFLPFFKEDLATRFISEYGKGLWNPDPNAIF) form the F-box domain. LRR repeat units follow at residues 155–177 (CTTL…WFRL) and 223–246 (VPTL…SFWI). In terms of domain architecture, FBD spans 361 to 411 (VWEKPTVVPECLSTRLEILKWRDYEGTEHEKDMVGYILANATFLQRATFST).

This Arabidopsis thaliana (Mouse-ear cress) protein is F-box/FBD/LRR-repeat protein At5g56570.